The following is a 115-amino-acid chain: Putative ethidium bromide resistance protein (115 aa).

The next 4 membrane-spanning stretches (helical) occupy residues 4 to 21 (WLFL…TSAL), 30 to 47 (LAPS…FYFL), 58 to 79 (VAYA…WLLH), and 85 to 104 (AWGF…ARSP).

It belongs to the drug/metabolite transporter (DMT) superfamily. Small multidrug resistance (SMR) (TC 2.A.7.1) family.

It localises to the cell membrane. Functionally, one of the determinants for resistance to ethidium bromide and quaternary ammonium compounds. This is Putative ethidium bromide resistance protein (ebr) from Escherichia coli.